A 487-amino-acid polypeptide reads, in one-letter code: Glutamate--tRNA ligase (487 aa).

The 'HIGH' region motif lies at 11–21 (PSPTGYPHLGN). 4 residues coordinate Zn(2+): Cys-108, Cys-110, Cys-135, and Asp-137. Residues 245 to 249 (KLSKR) carry the 'KMSKS' region motif. Lys-248 is a binding site for ATP.

Belongs to the class-I aminoacyl-tRNA synthetase family. Glutamate--tRNA ligase type 1 subfamily. As to quaternary structure, monomer. Requires Zn(2+) as cofactor.

It localises to the cytoplasm. The catalysed reaction is tRNA(Glu) + L-glutamate + ATP = L-glutamyl-tRNA(Glu) + AMP + diphosphate. Functionally, catalyzes the attachment of glutamate to tRNA(Glu) in a two-step reaction: glutamate is first activated by ATP to form Glu-AMP and then transferred to the acceptor end of tRNA(Glu). This Dehalococcoides mccartyi (strain CBDB1) protein is Glutamate--tRNA ligase.